An 801-amino-acid polypeptide reads, in one-letter code: MDISNEAGVDAFSIIGPTTIIGRTIAVRILFCNSVSIFRHKVFRILKFFLRGGRVLLSPFVSLLHPRNPQGILVMVTTMAFLLNRYTSLKAKAEMAYRRKFWRNMMRAALTYEEWSHAAKMLDKETPKVNETDLFDVELVSNKLDELKHRRHEGSLRDIIFCMRADLVRNLGNMCNPELHKGRLHVPRLIKEYIDEVSTQLRMVCDMDTEELSLEEKLSFMHETRHAYGRTALLLSGGASLGAFHLGVVKTLVEHKLLPRIIAGSSVGSVMCAVVGTRSWPELQSFFEGSWHALQFFDQMGGIFTTVKRVMTQGAVHEIRHLQWKLRNLTNNLTFQEAYDITGRILGITVCSLRKHEPPRCLNYLTSPHVVIWSAVTASCAFPGLFEAQELMAKDRTGEIVPYHPPFNLDPEEGSASVRRWRDGSLEMDLPMIQLKELFNVNHFIVSQANPHIAPFLRMKEFVRACGGRFAAKLAQLAEMEVKHRCNQVLELGLPLREVASLFAQEWEGDVTIVMPATFSQYLKIIQNPSNVEIQKAANQGRRCTWEKLAVIKANFGIELALDECVTVLNHMRRLKRSAERAAAFSAISSSPPSKHLLAGTNRFNASKRIPSWNCIARQNSSGSVDDDVLAEASRLYQHIVVGSGRNSNRTSNLSHTYDAGSECDSPEAEDWTRSGGPLMRTNSAQMFTDYVQNLDAVDPEQIRASENDSIVAASSSSHSITVTEGDYLQTGRTHNGFVLNLVRGENLRMNSEPEDSQNESEIPETPESVQLDSPEKDIIDGESSASEDGDAQANLIHDHE.

Asn130 carries an N-linked (GlcNAc...) asparagine glycan. 2 helical membrane passes run Ala232 to Val249 and Ile261 to Thr277. The region spanning Leu233–Lys436 is the PNPLA domain. Positions Gly264–Gly268 match the GXSXG motif. The active-site Nucleophile is Ser266. 2 N-linked (GlcNAc...) asparagine glycosylation sites follow: Asn328 and Asn332. The active-site Proton acceptor is Asp423. N-linked (GlcNAc...) asparagine glycosylation is found at Asn605, Asn620, Asn649, Asn653, Asn708, and Asn759. Residues Ser648–Ser675 are disordered. The interval Met750 to Glu801 is disordered. The segment covering Glu753–Glu765 has biased composition (acidic residues).

As to expression, highly expressed in mature pollen.

The protein localises to the lipid droplet. It is found in the membrane. The enzyme catalyses a triacylglycerol + H2O = a diacylglycerol + a fatty acid + H(+). Functionally, may be involved in the release of fatty acids from the oil body in germinating seedlings. Can hydrolyze triacylglycerols in vitro. This Arabidopsis thaliana (Mouse-ear cress) protein is Triacylglycerol lipase SDP1L.